The sequence spans 516 residues: MRIIMKKTTLLVILDGWGYSDSDYFNAIKNANTPTWDSIWQEFPKTLINASSLEVGLPRSQMGNSEVGHVNIGCGRVVYQELTKIDKAIEEKTFGDNKAICAAIDNVIKNDSNLHLIGLLSPGGVHSHEEHIFEMIKIAKQKGIKRLYLHAFLDGRDTPPRSAEKSIKKADKLLQDLNLGYIASVCGRYYAMDRDNRWDRVEKAYNAIVNANADFIYDSALEALEQSYARDQSDEFVIPTCIKKDGHLVKVQDNDSVIFMNFRADRAREISHAFTDESFDHFPRKKHLNINFTTLTEYDSKLKCAVAFPPEQPINTLGEVLMKNHKTQLRIAETEKYPHVTFFFNGGREEQFEGEDRILIPSPKVATYDLQPEMSAPEVTDKLVAAINSGKYDCIVCNYANSDMVGHTGNYEAAMQAIEYLDKCIARLKDAILEHDGNMFITADHGNADMMVNPETQKPHTAHTTNLVPFIYVGHKKAQVALEHGKLSDIAPTLLNVMGIAQPKEMTGKTIFNFEK.

The Mn(2+) site is built by aspartate 15 and serine 65. The Phosphoserine intermediate role is filled by serine 65. Residues histidine 126, 156–157, arginine 188, arginine 194, 263–266, and lysine 336 each bind substrate; these read RD and RADR. The Mn(2+) site is built by aspartate 403, histidine 407, aspartate 444, histidine 445, and histidine 463.

It belongs to the BPG-independent phosphoglycerate mutase family. As to quaternary structure, monomer. Requires Mn(2+) as cofactor.

It catalyses the reaction (2R)-2-phosphoglycerate = (2R)-3-phosphoglycerate. It functions in the pathway carbohydrate degradation; glycolysis; pyruvate from D-glyceraldehyde 3-phosphate: step 3/5. Catalyzes the interconversion of 2-phosphoglycerate and 3-phosphoglycerate. The polypeptide is 2,3-bisphosphoglycerate-independent phosphoglycerate mutase (Francisella tularensis subsp. holarctica (strain OSU18)).